We begin with the raw amino-acid sequence, 308 residues long: MSAQKPGLHPRNRHQHRYDLAALCQTTPELTSFLIRTPAGEQSVDFANPQAVKALNKALLAHFYAVTHWDIPPGFLCPPVPGRADYIHHLADLLGETTGSIPAQATILDVGVGANCIYPLIGVHEYGWRFTGSEVSDAAMSSAQAIIQANTGLSRAIRLRRQKDPAAIFTGIIHKNEFYDATLCNPPFHDSAAAARAGSERKRRNLGQNKDDALNFGGQQQELWCEGGEVAFIKKMIAESQTFRRQVLWFTTLVSRGENLPPLYRALTEAGAVKVVKKEMAQGQKQSRFIAWTFMDDDQRRRFITRKR.

The protein belongs to the methyltransferase superfamily. METTL16/RlmF family.

It is found in the cytoplasm. The catalysed reaction is adenosine(1618) in 23S rRNA + S-adenosyl-L-methionine = N(6)-methyladenosine(1618) in 23S rRNA + S-adenosyl-L-homocysteine + H(+). Its function is as follows. Specifically methylates the adenine in position 1618 of 23S rRNA. The protein is Ribosomal RNA large subunit methyltransferase F of Salmonella paratyphi A (strain ATCC 9150 / SARB42).